The sequence spans 625 residues: Chaperone protein HtpG (625 aa).

An a; substrate-binding region spans residues 1-341 (MEKKQFQAES…SEDLSLNISR (341 aa)). The segment at 342-551 (EMLQHDRQLK…DGEITLEMEK (210 aa)) is b. The segment at 552 to 625 (VLQAMPDNQN…FSQNMCKVMV (74 aa)) is c.

Belongs to the heat shock protein 90 family. Homodimer.

The protein resides in the cytoplasm. In terms of biological role, molecular chaperone. Has ATPase activity. This chain is Chaperone protein HtpG, found in Shouchella clausii (strain KSM-K16) (Alkalihalobacillus clausii).